A 286-amino-acid chain; its full sequence is uncharacterized protein (286 aa).

The 146-residue stretch at M1–F146 folds into the Integrase catalytic domain. Basic residues predominate over residues R252–K263. Residues R252–M286 form a disordered region. Over residues K264–D273 the composition is skewed to basic and acidic residues. Positions T274 to M286 are enriched in low complexity.

This is an uncharacterized protein from Caenorhabditis elegans.